The chain runs to 672 residues: SHC SH2 domain-binding protein 1 (672 aa).

Ala2 carries the N-acetylalanine modification. Ser5 carries the post-translational modification Phosphoserine. Thr7 bears the Phosphothreonine mark. 5 positions are modified to phosphoserine: Ser31, Ser42, Ser44, Ser47, and Ser273. PbH1 repeat units follow at residues 428–451, 452–473, 474–496, 497–518, and 526–548; these read GADI…LIVH, RGKT…TVRT, SAEF…EIYP, GSQC…LIKD, and IPKI…VLVK. Ser634 is subject to Phosphoserine.

As to quaternary structure, interacts directly with isoform p52shc of SHC1 via its SH2 domain. Interacts with TRIM71; leading to enhanced SHCBP1 protein stability. Interacts with both members of the centralspindlin complex, KIF23 and RACGAP1.

It is found in the midbody. Its subcellular location is the cytoplasm. It localises to the cytoskeleton. The protein localises to the spindle. May play a role in signaling pathways governing cellular proliferation, cell growth and differentiation. May be a component of a novel signaling pathway downstream of Shc. Acts as a positive regulator of FGF signaling in neural progenitor cells. The chain is SHC SH2 domain-binding protein 1 (SHCBP1) from Homo sapiens (Human).